Here is a 1039-residue protein sequence, read N- to C-terminus: Isoleucine--tRNA ligase (1039 aa).

Positions 46 to 56 match the 'HIGH' region motif; sequence PYCSGAIHLGT. The 'KMSKS' region signature appears at 600 to 604; it reads KMSKS. Residue Lys-603 participates in ATP binding.

The protein belongs to the class-I aminoacyl-tRNA synthetase family. IleS type 2 subfamily. As to quaternary structure, monomer. It depends on Zn(2+) as a cofactor.

Its subcellular location is the cytoplasm. The enzyme catalyses tRNA(Ile) + L-isoleucine + ATP = L-isoleucyl-tRNA(Ile) + AMP + diphosphate. Catalyzes the attachment of isoleucine to tRNA(Ile). As IleRS can inadvertently accommodate and process structurally similar amino acids such as valine, to avoid such errors it has two additional distinct tRNA(Ile)-dependent editing activities. One activity is designated as 'pretransfer' editing and involves the hydrolysis of activated Val-AMP. The other activity is designated 'posttransfer' editing and involves deacylation of mischarged Val-tRNA(Ile). In Methanocaldococcus jannaschii (strain ATCC 43067 / DSM 2661 / JAL-1 / JCM 10045 / NBRC 100440) (Methanococcus jannaschii), this protein is Isoleucine--tRNA ligase.